The primary structure comprises 158 residues: Small ribosomal subunit protein uS15 (158 aa).

Residues 1–10 (MARMHTRRRG) are compositionally biased toward basic residues. Positions 1–66 (MARMHTRRRG…EGVKGTPIPD (66 aa)) are disordered. The segment covering 21–32 (DPPEWSDIDADA) has biased composition (acidic residues). Basic and acidic residues predominate over residues 33–45 (IEERVVELAEQGH).

The protein belongs to the universal ribosomal protein uS15 family. As to quaternary structure, part of the 30S ribosomal subunit.

The protein is Small ribosomal subunit protein uS15 of Haloquadratum walsbyi (strain DSM 16790 / HBSQ001).